A 343-amino-acid chain; its full sequence is Glyceraldehyde-3-phosphate dehydrogenase 1 (343 aa).

Residues 13-14, D35, R79, and S121 contribute to the NAD(+) site; that span reads RI. Residues 154–156, T185, 214–215, and R237 contribute to the D-glyceraldehyde 3-phosphate site; these read SCT and TG. C155 (nucleophile) is an active-site residue. Position 319 (N319) interacts with NAD(+).

It belongs to the glyceraldehyde-3-phosphate dehydrogenase family. In terms of assembly, homotetramer.

It localises to the cytoplasm. The catalysed reaction is D-glyceraldehyde 3-phosphate + phosphate + NAD(+) = (2R)-3-phospho-glyceroyl phosphate + NADH + H(+). Its pathway is carbohydrate degradation; glycolysis; pyruvate from D-glyceraldehyde 3-phosphate: step 1/5. Functionally, catalyzes the oxidative phosphorylation of glyceraldehyde 3-phosphate (G3P) to 1,3-bisphosphoglycerate (BPG) using the cofactor NAD. The first reaction step involves the formation of a hemiacetal intermediate between G3P and a cysteine residue, and this hemiacetal intermediate is then oxidized to a thioester, with concomitant reduction of NAD to NADH. The reduced NADH is then exchanged with the second NAD, and the thioester is attacked by a nucleophilic inorganic phosphate to produce BPG. In Trichormus variabilis (strain ATCC 29413 / PCC 7937) (Anabaena variabilis), this protein is Glyceraldehyde-3-phosphate dehydrogenase 1 (gap1).